A 242-amino-acid polypeptide reads, in one-letter code: Probable transcriptional regulatory protein Bphyt_1301 (242 aa).

The protein belongs to the TACO1 family.

It is found in the cytoplasm. In Paraburkholderia phytofirmans (strain DSM 17436 / LMG 22146 / PsJN) (Burkholderia phytofirmans), this protein is Probable transcriptional regulatory protein Bphyt_1301.